Consider the following 222-residue polypeptide: Deoxyribose-phosphate aldolase (222 aa).

The Proton donor/acceptor role is filled by D90. K152 functions as the Schiff-base intermediate with acetaldehyde in the catalytic mechanism. The active-site Proton donor/acceptor is the K181.

This sequence belongs to the DeoC/FbaB aldolase family. DeoC type 1 subfamily.

The protein localises to the cytoplasm. It catalyses the reaction 2-deoxy-D-ribose 5-phosphate = D-glyceraldehyde 3-phosphate + acetaldehyde. Its pathway is carbohydrate degradation; 2-deoxy-D-ribose 1-phosphate degradation; D-glyceraldehyde 3-phosphate and acetaldehyde from 2-deoxy-alpha-D-ribose 1-phosphate: step 2/2. Its function is as follows. Catalyzes a reversible aldol reaction between acetaldehyde and D-glyceraldehyde 3-phosphate to generate 2-deoxy-D-ribose 5-phosphate. The chain is Deoxyribose-phosphate aldolase from Pectobacterium carotovorum subsp. carotovorum (strain PC1).